The primary structure comprises 156 residues: Small ribosomal subunit protein bS16 (156 aa).

Residues 124 to 135 (AAKAAEAETPAE) show a composition bias toward low complexity. Residues 124–156 (AAKAAEAETPAEVQHDDEKVELADVEESAPESV) are disordered. The segment covering 136–145 (VQHDDEKVEL) has biased composition (basic and acidic residues). The segment covering 146-156 (ADVEESAPESV) has biased composition (acidic residues).

This sequence belongs to the bacterial ribosomal protein bS16 family.

This is Small ribosomal subunit protein bS16 from Bifidobacterium animalis subsp. lactis (strain AD011).